A 362-amino-acid polypeptide reads, in one-letter code: Protein BIG GRAIN 1-like D (362 aa).

Disordered regions lie at residues 22–113 (IDPK…TLFH), 132–168 (KFNR…GGRI), and 303–327 (VKTN…ASDS). Over residues 23–47 (DPKTQKTQPYVGSVNTTTKKQSIVT) the composition is skewed to polar residues. The span at 50–60 (VPDRKIHRDRF) shows a compositional bias: basic and acidic residues. Over residues 63–78 (SVSSSSDSNSSIFSSS) the composition is skewed to low complexity. A compositionally biased stretch (basic and acidic residues) spans 132-144 (KFNRHDENWENTR). Residues 309–324 (EDYEDDDEDDDDDDVA) show a composition bias toward acidic residues.

Belongs to the BIG GRAIN 1 (BG1) plant protein family.

Its subcellular location is the cell membrane. Involved in auxin transport. Regulator of the auxin signaling pathway. This is Protein BIG GRAIN 1-like D from Arabidopsis thaliana (Mouse-ear cress).